Consider the following 778-residue polypeptide: Endonuclease MutS2 (778 aa).

An ATP-binding site is contributed by 328-335 (GPNTGGKT). The Smr domain maps to 702-777 (LDLRGKRYEE…GSGATIVTFK (76 aa)).

Belongs to the DNA mismatch repair MutS family. MutS2 subfamily. Homodimer. Binds to stalled ribosomes, contacting rRNA.

Functionally, endonuclease that is involved in the suppression of homologous recombination and thus may have a key role in the control of bacterial genetic diversity. In terms of biological role, acts as a ribosome collision sensor, splitting the ribosome into its 2 subunits. Detects stalled/collided 70S ribosomes which it binds and splits by an ATP-hydrolysis driven conformational change. Acts upstream of the ribosome quality control system (RQC), a ribosome-associated complex that mediates the extraction of incompletely synthesized nascent chains from stalled ribosomes and their subsequent degradation. Probably generates substrates for RQC. In Streptococcus pneumoniae serotype 2 (strain D39 / NCTC 7466), this protein is Endonuclease MutS2.